An 854-amino-acid polypeptide reads, in one-letter code: Glucans biosynthesis glucosyltransferase H (854 aa).

Helical transmembrane passes span 155–175 (ILLVLTLFQTAIATWYMKTIL), 209–229 (ILVLFAVLFCWVSAGFWTALM), 528–548 (VFLTGVMSYLSAPLWFMFLML), 583–603 (IALFSTTLVLLFLPKLLSVIL), 619–639 (FISLLLEMLFSVLLAPVRMLF), 671–691 (FVRHGSQLILGLVWAIGMAWL), and 695–715 (FLWWLAPIVFSLILSPFVSVY).

The protein belongs to the glycosyltransferase 2 family. OpgH subfamily.

The protein resides in the cell inner membrane. It functions in the pathway glycan metabolism; osmoregulated periplasmic glucan (OPG) biosynthesis. Functionally, involved in the biosynthesis of osmoregulated periplasmic glucans (OPGs). This Pectobacterium carotovorum subsp. carotovorum (strain PC1) protein is Glucans biosynthesis glucosyltransferase H.